Reading from the N-terminus, the 268-residue chain is Phosphonates import ATP-binding protein PhnC (268 aa).

Positions 11–254 (LHAEAVTKRF…EVMAIYQRAE (244 aa)) constitute an ABC transporter domain. 43-50 (GLSGSGKS) is a binding site for ATP.

Belongs to the ABC transporter superfamily. Phosphonates importer (TC 3.A.1.9.1) family. In terms of assembly, the complex is composed of two ATP-binding proteins (PhnC), two transmembrane proteins (PhnE) and a solute-binding protein (PhnD).

The protein resides in the cell membrane. It catalyses the reaction phosphonate(out) + ATP + H2O = phosphonate(in) + ADP + phosphate + H(+). Functionally, part of the ABC transporter complex PhnCDE involved in phosphonates import. Responsible for energy coupling to the transport system. The polypeptide is Phosphonates import ATP-binding protein PhnC (Nocardia farcinica (strain IFM 10152)).